The chain runs to 852 residues: Probable inorganic carbon transporter subunit DabA (852 aa).

The Zn(2+) site is built by Cys370, Asp372, His554, and Cys569.

It belongs to the inorganic carbon transporter (TC 9.A.2) DabA family. As to quaternary structure, forms a complex with DabB. The cofactor is Zn(2+).

It is found in the cell inner membrane. Functionally, part of an energy-coupled inorganic carbon pump. In Novosphingobium aromaticivorans (strain ATCC 700278 / DSM 12444 / CCUG 56034 / CIP 105152 / NBRC 16084 / F199), this protein is Probable inorganic carbon transporter subunit DabA.